A 110-amino-acid polypeptide reads, in one-letter code: Nucleoid-associated protein Ent638_0951 (110 aa).

This sequence belongs to the YbaB/EbfC family. In terms of assembly, homodimer.

It is found in the cytoplasm. Its subcellular location is the nucleoid. Functionally, binds to DNA and alters its conformation. May be involved in regulation of gene expression, nucleoid organization and DNA protection. This Enterobacter sp. (strain 638) protein is Nucleoid-associated protein Ent638_0951.